The chain runs to 249 residues: Glucosamine-6-phosphate deaminase (249 aa).

Asp-67 acts as the Proton acceptor; for enolization step in catalysis. Asn-136 serves as the catalytic For ring-opening step. The active-site Proton acceptor; for ring-opening step is His-138. The active-site For ring-opening step is Glu-143.

It belongs to the glucosamine/galactosamine-6-phosphate isomerase family. NagB subfamily.

The catalysed reaction is alpha-D-glucosamine 6-phosphate + H2O = beta-D-fructose 6-phosphate + NH4(+). The protein operates within amino-sugar metabolism; N-acetylneuraminate degradation; D-fructose 6-phosphate from N-acetylneuraminate: step 5/5. Functionally, catalyzes the reversible isomerization-deamination of glucosamine 6-phosphate (GlcN6P) to form fructose 6-phosphate (Fru6P) and ammonium ion. In Clostridioides difficile (strain 630) (Peptoclostridium difficile), this protein is Glucosamine-6-phosphate deaminase.